Here is a 206-residue protein sequence, read N- to C-terminus: Guanylate kinase (206 aa).

Residues 5–183 (FNLLILSGPS…SKEIILSIAK (179 aa)) form the Guanylate kinase-like domain. ATP is bound at residue 12–19 (GPSGAGKS).

The protein belongs to the guanylate kinase family.

The protein localises to the cytoplasm. It carries out the reaction GMP + ATP = GDP + ADP. Its function is as follows. Essential for recycling GMP and indirectly, cGMP. The protein is Guanylate kinase (gmk) of Helicobacter pylori (strain J99 / ATCC 700824) (Campylobacter pylori J99).